Reading from the N-terminus, the 253-residue chain is MDQTDQTTHFGFRDVPLGEKQTLVNDVFHSVAQRYDLMNDLMSAGLHRVWKDIMINTLNPPKSDAPFALLDVAGGTGDISFRAARKAGAGFHATVCDINGDMLEVGRQRALKQYLEDKVSFVEGNAEKLAFPDRSFDAYTIAFGIRNVPQIELALAEAYRVLKHGGRFLCLEFSTVEVPGLDKLYDLFSFNVIPQLGRAVTGDAESYRYLVESIRQFPRPNAFAEMISAAGFSRVSWQTLSGGIVALHSGWRL.

Residues T76, D97, and 125–126 (NA) contribute to the S-adenosyl-L-methionine site.

This sequence belongs to the class I-like SAM-binding methyltransferase superfamily. MenG/UbiE family.

It carries out the reaction a 2-demethylmenaquinol + S-adenosyl-L-methionine = a menaquinol + S-adenosyl-L-homocysteine + H(+). It catalyses the reaction a 2-methoxy-6-(all-trans-polyprenyl)benzene-1,4-diol + S-adenosyl-L-methionine = a 5-methoxy-2-methyl-3-(all-trans-polyprenyl)benzene-1,4-diol + S-adenosyl-L-homocysteine + H(+). It participates in quinol/quinone metabolism; menaquinone biosynthesis; menaquinol from 1,4-dihydroxy-2-naphthoate: step 2/2. It functions in the pathway cofactor biosynthesis; ubiquinone biosynthesis. Methyltransferase required for the conversion of demethylmenaquinol (DMKH2) to menaquinol (MKH2) and the conversion of 2-polyprenyl-6-methoxy-1,4-benzoquinol (DDMQH2) to 2-polyprenyl-3-methyl-6-methoxy-1,4-benzoquinol (DMQH2). This Bradyrhizobium sp. (strain BTAi1 / ATCC BAA-1182) protein is Ubiquinone/menaquinone biosynthesis C-methyltransferase UbiE.